We begin with the raw amino-acid sequence, 117 residues long: Histone H1-like protein HC1 (117 aa).

The segment at 57–117 (EKSGLMTRKP…KSSKSRYLRK (61 aa)) is disordered. Over residues 66–81 (PATKAKKAAATKKAAP) the composition is skewed to basic residues. The segment covering 82-94 (KPKIQAKAAPKAK) has biased composition (low complexity). Positions 95 to 117 (ATTKKTPAKAKAKKSSKSRYLRK) are enriched in basic residues.

Belongs to the histone H1/H5 family. HCT subfamily.

Functionally, might have a role analogous to that of eukaryotic histone proteins. The sequence is that of Histone H1-like protein HC1 (hctA) from Chlamydia psittaci (Chlamydophila psittaci).